The chain runs to 179 residues: Crossover junction endodeoxyribonuclease RuvC (179 aa).

Catalysis depends on residues aspartate 7, glutamate 67, and aspartate 140. Positions 7, 67, and 140 each coordinate Mg(2+).

The protein belongs to the RuvC family. In terms of assembly, homodimer which binds Holliday junction (HJ) DNA. The HJ becomes 2-fold symmetrical on binding to RuvC with unstacked arms; it has a different conformation from HJ DNA in complex with RuvA. In the full resolvosome a probable DNA-RuvA(4)-RuvB(12)-RuvC(2) complex forms which resolves the HJ. Mg(2+) is required as a cofactor.

It is found in the cytoplasm. It carries out the reaction Endonucleolytic cleavage at a junction such as a reciprocal single-stranded crossover between two homologous DNA duplexes (Holliday junction).. Its function is as follows. The RuvA-RuvB-RuvC complex processes Holliday junction (HJ) DNA during genetic recombination and DNA repair. Endonuclease that resolves HJ intermediates. Cleaves cruciform DNA by making single-stranded nicks across the HJ at symmetrical positions within the homologous arms, yielding a 5'-phosphate and a 3'-hydroxyl group; requires a central core of homology in the junction. The consensus cleavage sequence is 5'-(A/T)TT(C/G)-3'. Cleavage occurs on the 3'-side of the TT dinucleotide at the point of strand exchange. HJ branch migration catalyzed by RuvA-RuvB allows RuvC to scan DNA until it finds its consensus sequence, where it cleaves and resolves the cruciform DNA. This Salinibacter ruber (strain DSM 13855 / M31) protein is Crossover junction endodeoxyribonuclease RuvC.